Consider the following 247-residue polypeptide: DNA-directed RNA polymerase subunit Rpo3 (247 aa).

The protein belongs to the archaeal Rpo3/eukaryotic RPB3 RNA polymerase subunit family. In terms of assembly, part of the RNA polymerase complex.

The protein localises to the cytoplasm. The catalysed reaction is RNA(n) + a ribonucleoside 5'-triphosphate = RNA(n+1) + diphosphate. Functionally, DNA-dependent RNA polymerase (RNAP) catalyzes the transcription of DNA into RNA using the four ribonucleoside triphosphates as substrates. The protein is DNA-directed RNA polymerase subunit Rpo3 of Natronomonas pharaonis (strain ATCC 35678 / DSM 2160 / CIP 103997 / JCM 8858 / NBRC 14720 / NCIMB 2260 / Gabara) (Halobacterium pharaonis).